Here is a 341-residue protein sequence, read N- to C-terminus: Casein kinase I isoform alpha (341 aa).

In terms of domain architecture, Protein kinase spans 16–284 (YKLIRKIGSG…YLRQLFRILF (269 aa)). ATP is bound by residues 22–30 (IGSGSFGDI) and Lys-45. Asp-135 serves as the catalytic Proton acceptor. Positions 306–320 (QSQSSGVPGTNTTTQ) are enriched in polar residues. Residues 306 to 341 (QSQSSGVPGTNTTTQGATVPSAGVPAGVAPGGTTPQ) form a disordered region. Low complexity predominate over residues 321 to 341 (GATVPSAGVPAGVAPGGTTPQ).

The protein belongs to the protein kinase superfamily. CK1 Ser/Thr protein kinase family. Casein kinase I subfamily.

It catalyses the reaction L-seryl-[protein] + ATP = O-phospho-L-seryl-[protein] + ADP + H(+). The catalysed reaction is L-threonyl-[protein] + ATP = O-phospho-L-threonyl-[protein] + ADP + H(+). This is Casein kinase I isoform alpha (kin-19) from Caenorhabditis elegans.